Reading from the N-terminus, the 585-residue chain is Proline--tRNA ligase (585 aa).

The protein belongs to the class-II aminoacyl-tRNA synthetase family. ProS type 1 subfamily. As to quaternary structure, homodimer.

It is found in the cytoplasm. It catalyses the reaction tRNA(Pro) + L-proline + ATP = L-prolyl-tRNA(Pro) + AMP + diphosphate. Catalyzes the attachment of proline to tRNA(Pro) in a two-step reaction: proline is first activated by ATP to form Pro-AMP and then transferred to the acceptor end of tRNA(Pro). As ProRS can inadvertently accommodate and process non-cognate amino acids such as alanine and cysteine, to avoid such errors it has two additional distinct editing activities against alanine. One activity is designated as 'pretransfer' editing and involves the tRNA(Pro)-independent hydrolysis of activated Ala-AMP. The other activity is designated 'posttransfer' editing and involves deacylation of mischarged Ala-tRNA(Pro). The misacylated Cys-tRNA(Pro) is not edited by ProRS. The sequence is that of Proline--tRNA ligase from Acidobacterium capsulatum (strain ATCC 51196 / DSM 11244 / BCRC 80197 / JCM 7670 / NBRC 15755 / NCIMB 13165 / 161).